We begin with the raw amino-acid sequence, 174 residues long: Large ribosomal subunit protein uL10 (174 aa).

Belongs to the universal ribosomal protein uL10 family. In terms of assembly, part of the ribosomal stalk of the 50S ribosomal subunit. The N-terminus interacts with L11 and the large rRNA to form the base of the stalk. The C-terminus forms an elongated spine to which L12 dimers bind in a sequential fashion forming a multimeric L10(L12)X complex.

Functionally, forms part of the ribosomal stalk, playing a central role in the interaction of the ribosome with GTP-bound translation factors. The chain is Large ribosomal subunit protein uL10 from Geotalea uraniireducens (strain Rf4) (Geobacter uraniireducens).